A 38-amino-acid polypeptide reads, in one-letter code: Spheniscin-2 (38 aa).

3 disulfide bridges follow: Cys-5/Cys-33, Cys-12/Cys-27, and Cys-17/Cys-34.

As to quaternary structure, monomer. In terms of tissue distribution, secreted into the stomach cavity.

It is found in the secreted. Its function is as follows. Has antifungal activity and antibacterial activity against Gram-positive and Gram-negative bacteria. Involved in the process of food preservation in the stomach during the incubation fast. May also be present during infection. The protein is Spheniscin-2 of Aptenodytes patagonicus (King penguin).